Here is an 820-residue protein sequence, read N- to C-terminus: Protein O-mannosyl-transferase 2 (820 aa).

A helical transmembrane segment spans residues 124 to 144; it reads AAGWWATLAVVTLLSFATRFH. The N-linked (GlcNAc...) asparagine glycan is linked to asparagine 168. The next 5 helical transmembrane spans lie at 170-190, 216-236, 261-281, 301-321, and 353-373; these read TFFFDVHPPLGKMLIGLAGYL, GFCAFLGSWLIPFAYLTVLDL, QYILLDPILMFFIMAAMLSMV, LTGISLAGALGVKFVGLFIIV, and ILCLIVLPLVLYVTIFAVHVM. Residues asparagine 376 and asparagine 400 are each glycosylated (N-linked (GlcNAc...) asparagine). 3 consecutive MIR domains span residues 404-460, 473-529, and 534-591; these read PEHL…IKKY, VEFV…IEVV, and GNRI…IEEH. Residue asparagine 515 is glycosylated (N-linked (GlcNAc...) asparagine). N-linked (GlcNAc...) asparagine glycosylation is found at asparagine 598 and asparagine 653. 4 helical membrane passes run 659 to 679, 713 to 733, 735 to 755, and 774 to 794; these read VYLLGNPVVWWLNLVSIVLYL, LLLGWMLHYFPFFLMGRILYF, HYFPAMLFSSMLTGILWDTLL, and VGILSLLLTTAYSFYLFHPLA.

It belongs to the glycosyltransferase 39 family. Post-translationally, N-glycosylated. Ubiquitous. Highly expressed in the acrosome of cap phase spermatids, in spermatocytes and liver. Isoform 1 seems to be testis-specific.

The protein localises to the endoplasmic reticulum membrane. The enzyme catalyses a di-trans,poly-cis-dolichyl beta-D-mannosyl phosphate + L-seryl-[protein] = 3-O-(alpha-D-mannosyl)-L-seryl-[protein] + a di-trans,poly-cis-dolichyl phosphate + H(+). It carries out the reaction a di-trans,poly-cis-dolichyl beta-D-mannosyl phosphate + L-threonyl-[protein] = 3-O-(alpha-D-mannosyl)-L-threonyl-[protein] + a di-trans,poly-cis-dolichyl phosphate + H(+). The protein operates within protein modification; protein glycosylation. Transfers mannosyl residues to the hydroxyl group of serine or threonine residues. Coexpression of both POMT1 and POMT2 is necessary for enzyme activity, expression of either POMT1 or POMT2 alone is insufficient. Essentially dedicated to O-mannosylation of alpha-DAG1 and few other proteins but not of cadherins and protocaherins. This chain is Protein O-mannosyl-transferase 2 (Pomt2), found in Mus musculus (Mouse).